Here is a 371-residue protein sequence, read N- to C-terminus: Surface protein P12p (371 aa).

The first 20 residues, 1–20 (MHIVSFIIFFFALFFPISIC), serve as a signal peptide directing secretion. 6-Cys domains lie at 23-168 (INGV…LKKN) and 169-343 (ILYG…FSNQ). 4 disulfides stabilise this stretch: Cys-27–Cys-62, Cys-76–Cys-144, Cys-93–Cys-142, and Cys-173–Cys-245. N-linked (GlcNAc...) asparagine glycosylation occurs at Asn-184. A disordered region spans residues 202–239 (GNNNNDDDNNDDDNNNDNNNNDNNNNNNNNNNNNNNNN). Residues 206 to 216 (NDDDNNDDDNN) are compositionally biased toward acidic residues. Residues 217 to 239 (NDNNNNDNNNNNNNNNNNNNNNN) are compositionally biased toward low complexity. Residues Asn-242 and Asn-246 are each glycosylated (N-linked (GlcNAc...) asparagine). 2 disulfide bridges follow: Cys-260–Cys-323 and Cys-271–Cys-321.

It localises to the cell surface. It is found in the cell membrane. In Plasmodium falciparum (isolate 3D7), this protein is Surface protein P12p (PFS12P).